A 129-amino-acid chain; its full sequence is Nif-specific regulatory protein (129 aa).

Residues 1–46 enclose the Sigma-54 factor interaction domain; the sequence is EFLLTKIGRQQGRPLTVTDSAIRLLMSHRWPGNVRDVENCLERSAI. The H-T-H motif DNA-binding region spans 101-129; the sequence is QAKAARLLGMTPRQIAYRIQTLNIHMRKI.

Interacts with sigma-54.

Required for activation of most nif operons, which are directly involved in nitrogen fixation. The sequence is that of Nif-specific regulatory protein (nifA) from Azotobacter chroococcum mcd 1.